Reading from the N-terminus, the 386-residue chain is Chorismate synthase (386 aa).

Residues 32-60 (LPLSEDDVQRELDRRRPGQSGVSTPRSER) form a disordered region. Residues 38–47 (DVQRELDRRR) show a composition bias toward basic and acidic residues. Position 46 (Arg-46) interacts with NADP(+). Residues 123–125 (RAS), Gly-290, 305–309 (KPTPS), and Arg-332 each bind FMN.

Belongs to the chorismate synthase family. FMNH2 serves as cofactor.

It catalyses the reaction 5-O-(1-carboxyvinyl)-3-phosphoshikimate = chorismate + phosphate. It participates in metabolic intermediate biosynthesis; chorismate biosynthesis; chorismate from D-erythrose 4-phosphate and phosphoenolpyruvate: step 7/7. In terms of biological role, catalyzes the anti-1,4-elimination of the C-3 phosphate and the C-6 proR hydrogen from 5-enolpyruvylshikimate-3-phosphate (EPSP) to yield chorismate, which is the branch point compound that serves as the starting substrate for the three terminal pathways of aromatic amino acid biosynthesis. This reaction introduces a second double bond into the aromatic ring system. The chain is Chorismate synthase from Methanopyrus kandleri (strain AV19 / DSM 6324 / JCM 9639 / NBRC 100938).